The chain runs to 888 residues: Villin-like protein quail (888 aa).

A Gelsolin-like repeat occupies 307–366 (GVYLLDNYGQSIWLWVGGQAPQADALSAMGNGRAFVKKKKYPDNTLVVRVLEGHEPVEFK). Residues 823-888 (FDGHKKYPLT…MELKKQFKLF (66 aa)) form the HP domain.

It belongs to the villin/gelsolin family. As to expression, germline specific in adult flies.

Required for the formation of cytoplasmic actin filament bundles in nurse cells, possibly by regulating both the polymerization and organization of actin filaments. Mutations in quail result in female sterility due to the disruption of cytoplasmic transport from the nurse cells into the oocyte late in oogenesis. The polypeptide is Villin-like protein quail (qua) (Drosophila melanogaster (Fruit fly)).